We begin with the raw amino-acid sequence, 217 residues long: DNA repair protein homolog YobH (217 aa).

The UmuC domain occupies 1-68; the sequence is MAKAIQSSMW…RPLSKMWGIG (68 aa).

Belongs to the DNA polymerase type-Y family.

The chain is DNA repair protein homolog YobH (yobH) from Bacillus subtilis (strain 168).